The chain runs to 316 residues: Phospho-N-acetylmuramoyl-pentapeptide-transferase (316 aa).

The next 10 membrane-spanning stretches (helical) occupy residues 5–25 (IIFATLLSFTVAIISGRFFIP), 52–72 (TMGGIIFVVATFLTSLIFSPW), 76–96 (LFILLAGFLGYGLIGFADDFL), 116–136 (FLLAIVISWFIKSNVGTEIIV), 145–165 (LANFYIPFAVFIIVGTVNSVN), 172–192 (GLAAGVSTIVMAFFAMIALFL), 195–212 (VTYGVFSASLTGGLLGFL), 221–241 (VFMGDTGSLAIGGAVATVALL), 244–264 (LPLILPVLGIIYVAEAISVIL), and 296–316 (VVYSFWLVTLIALFVSFYSLS).

The protein belongs to the glycosyltransferase 4 family. MraY subfamily. Requires Mg(2+) as cofactor.

The protein localises to the cell membrane. It catalyses the reaction UDP-N-acetyl-alpha-D-muramoyl-L-alanyl-gamma-D-glutamyl-meso-2,6-diaminopimeloyl-D-alanyl-D-alanine + di-trans,octa-cis-undecaprenyl phosphate = di-trans,octa-cis-undecaprenyl diphospho-N-acetyl-alpha-D-muramoyl-L-alanyl-D-glutamyl-meso-2,6-diaminopimeloyl-D-alanyl-D-alanine + UMP. Its pathway is cell wall biogenesis; peptidoglycan biosynthesis. Catalyzes the initial step of the lipid cycle reactions in the biosynthesis of the cell wall peptidoglycan: transfers peptidoglycan precursor phospho-MurNAc-pentapeptide from UDP-MurNAc-pentapeptide onto the lipid carrier undecaprenyl phosphate, yielding undecaprenyl-pyrophosphoryl-MurNAc-pentapeptide, known as lipid I. This Caldanaerobacter subterraneus subsp. tengcongensis (strain DSM 15242 / JCM 11007 / NBRC 100824 / MB4) (Thermoanaerobacter tengcongensis) protein is Phospho-N-acetylmuramoyl-pentapeptide-transferase.